The primary structure comprises 182 residues: Troponin I, fast skeletal muscle (182 aa).

At G2 the chain carries N-acetylglycine. An involved in binding TNC region spans residues 2-48 (GDEEKRNRAITARRQHLKSVMLQIAATELEKEEGRREAEKQNYLAEH). T12 is modified (phosphothreonine; by PHK). An involved in binding TNC and actin region spans residues 97–117 (NQKLFDLRGKFKRPPLRRVRM). Phosphoserine; by PKA is present on S118.

Belongs to the troponin I family. As to quaternary structure, binds to actin and tropomyosin.

Its function is as follows. Troponin I is the inhibitory subunit of troponin, the thin filament regulatory complex which confers calcium-sensitivity to striated muscle actomyosin ATPase activity. The protein is Troponin I, fast skeletal muscle (TNNI2) of Oryctolagus cuniculus (Rabbit).